We begin with the raw amino-acid sequence, 182 residues long: CD-NTase-associated protein 15 (182 aa).

A run of 2 helical transmembrane segments spans residues 11–31 (ITGW…CTVW) and 33–53 (IGWI…TIGY).

This sequence belongs to the CBASS Cap15 membrane effector family. In terms of assembly, the beta barrel domain oligomerizes; in the presence of cyclic nucleotides (probably 3',2'-cGAMP) higher-level oligomers occur.

Its subcellular location is the cell membrane. Its function is as follows. Effector protein of a CBASS antivirus system. CBASS (cyclic oligonucleotide-based antiphage signaling system) provides immunity against bacteriophage. The CD-NTase protein (CdnE) synthesizes cyclic nucleotides in response to infection; these serve as specific second messenger signals. The signals activate a diverse range of effectors, leading to bacterial cell death and thus abortive phage infection. This system triggers membrane disruption without lysis. A type I-B CBASS system. Binds cyclic nucleotide second messenger 3',2'-cGAMP, probably oligomerizing, and induces cell membrane shrinkage and rupture, leading to cell death. Functionally, protects S.aureus against phage infection. When the CBASS operon (cdnE-cap15) is introduced in S.aureus strain RN4220 there is strong protection against lytic DNA phages 80alpha-vir and phi-NM1-gamma-6 but little to no protection against phages phi-NM4-gamma-4 or phi-12-gamma-3. This chain is CD-NTase-associated protein 15, found in Staphylococcus schleiferi.